We begin with the raw amino-acid sequence, 146 residues long: uncharacterized protein (146 aa).

This sequence to E.coli YmfS.

This is an uncharacterized protein from Escherichia coli (strain K12).